Consider the following 394-residue polypeptide: Phosphopentomutase (394 aa).

6 residues coordinate Mn(2+): Asp14, Asp287, His292, Asp328, His329, and His340.

Belongs to the phosphopentomutase family. It depends on Mn(2+) as a cofactor.

Its subcellular location is the cytoplasm. The enzyme catalyses 2-deoxy-alpha-D-ribose 1-phosphate = 2-deoxy-D-ribose 5-phosphate. The catalysed reaction is alpha-D-ribose 1-phosphate = D-ribose 5-phosphate. It functions in the pathway carbohydrate degradation; 2-deoxy-D-ribose 1-phosphate degradation; D-glyceraldehyde 3-phosphate and acetaldehyde from 2-deoxy-alpha-D-ribose 1-phosphate: step 1/2. In terms of biological role, isomerase that catalyzes the conversion of deoxy-ribose 1-phosphate (dRib-1-P) and ribose 1-phosphate (Rib-1-P) to deoxy-ribose 5-phosphate (dRib-5-P) and ribose 5-phosphate (Rib-5-P), respectively. This Listeria monocytogenes serotype 4a (strain HCC23) protein is Phosphopentomutase.